Reading from the N-terminus, the 674-residue chain is Probable L-type lectin-domain containing receptor kinase I.5 (674 aa).

The N-terminal stretch at 1–22 (MSKGLFLIWLISSFHLISFSTS) is a signal peptide. Residues 23–286 (SKDTSFVFNG…RPRAEHKKVQ (264 aa)) lie on the Extracellular side of the membrane. The segment at 25–258 (DTSFVFNGFG…YHYLLGWSFS (234 aa)) is legume-lectin like. N-linked (GlcNAc...) asparagine glycans are attached at residues N124, N181, N185, N204, and N225. A helical membrane pass occupies residues 287–307 (FALIIALPVILAIVVMAVLAG). Topologically, residues 308–674 (VYYHRKKKYA…DHEQPLEFKS (367 aa)) are cytoplasmic. A Protein kinase domain is found at 344-625 (FHKDRFLGRG…LPLPDFSPYT (282 aa)). ATP is bound by residues 350–358 (LGRGGFGEV) and K372. The active-site Proton acceptor is the D468. Low complexity predominate over residues 649–662 (NWSAPSASSSSANN). The tract at residues 649–674 (NWSAPSASSSSANNSKDHEQPLEFKS) is disordered. The span at 663 to 674 (SKDHEQPLEFKS) shows a compositional bias: basic and acidic residues.

The protein in the C-terminal section; belongs to the protein kinase superfamily. Ser/Thr protein kinase family. In the N-terminal section; belongs to the leguminous lectin family.

Its subcellular location is the cell membrane. The enzyme catalyses L-seryl-[protein] + ATP = O-phospho-L-seryl-[protein] + ADP + H(+). It catalyses the reaction L-threonyl-[protein] + ATP = O-phospho-L-threonyl-[protein] + ADP + H(+). The sequence is that of Probable L-type lectin-domain containing receptor kinase I.5 (LECRK15) from Arabidopsis thaliana (Mouse-ear cress).